A 414-amino-acid chain; its full sequence is 2,3-diketo-5-methylthiopentyl-1-phosphate enolase (414 aa).

Lys99 serves as the catalytic Proton acceptor. Substrate-binding positions include Lys148, 174–177 (KDDE), His265, Gly338, and 360–361 (GG). Mg(2+) is bound by residues Lys174, Asp176, and Glu177. Lys174 carries the post-translational modification N6-carboxylysine.

The protein belongs to the RuBisCO large chain family. Type IV subfamily. As to quaternary structure, homodimer. The cofactor is Mg(2+).

It carries out the reaction 5-methylsulfanyl-2,3-dioxopentyl phosphate = 2-hydroxy-5-methylsulfanyl-3-oxopent-1-enyl phosphate. It participates in amino-acid biosynthesis; L-methionine biosynthesis via salvage pathway; L-methionine from S-methyl-5-thio-alpha-D-ribose 1-phosphate: step 3/6. Catalyzes the enolization of 2,3-diketo-5-methylthiopentyl-1-phosphate (DK-MTP-1-P) into 2-hydroxy-3-keto-5-methylthiopentenyl-1-phosphate (HK-MTPenyl-1-P). The chain is 2,3-diketo-5-methylthiopentyl-1-phosphate enolase from Bacillus thuringiensis (strain Al Hakam).